The following is a 357-amino-acid chain: MHNQYGSLFSITTWGESHGPSIGVVIDGCPAGLPLAPEDFLPAMKRRRPGQLHTSPRQETDSVTILSGVYQQKTTGTPISLLIQNEDASSTSYEQLNDCYRPGHAQFAYEGKYGFADNRGGGRSSARETAARVAAGVVAKKILSSQGIKTLAFLSGFGPLENKTYPKLTDPLIRKVYSSPFYTILSQEEIQNLLLHDPEDSFGGIVSFITSPLPIGLGEPVFGKLPALLAAGMMSIPATKGFEIGEGFASAHMTGSTYLDSFIAKEGEISFQTNRCGGTLGGISIGQPLEGRVAFKPTSSIRKPCPSVSKDGEPITYKTPKQGRHDPCVAIRAVTVVEAMLDLTLVDLLLQHRCAKL.

Arg47 is a binding site for NADP(+). Residues 123 to 125, Gly281, 296 to 300, and Arg324 contribute to the FMN site; these read RSS and KPTSS.

The protein belongs to the chorismate synthase family. As to quaternary structure, homotetramer. FMNH2 serves as cofactor.

The enzyme catalyses 5-O-(1-carboxyvinyl)-3-phosphoshikimate = chorismate + phosphate. Its pathway is metabolic intermediate biosynthesis; chorismate biosynthesis; chorismate from D-erythrose 4-phosphate and phosphoenolpyruvate: step 7/7. Catalyzes the anti-1,4-elimination of the C-3 phosphate and the C-6 proR hydrogen from 5-enolpyruvylshikimate-3-phosphate (EPSP) to yield chorismate, which is the branch point compound that serves as the starting substrate for the three terminal pathways of aromatic amino acid biosynthesis. This reaction introduces a second double bond into the aromatic ring system. This is Chorismate synthase from Chlamydia muridarum (strain MoPn / Nigg).